The following is a 404-amino-acid chain: Caspase-1 (404 aa).

Residues 1–91 enclose the CARD domain; the sequence is MADKVLKEKR…YLAGTLGLSA (91 aa). A propeptide spanning residues 1-119 is cleaved from the precursor; the sequence is MADKVLKEKR…SFPAPQAVQD (119 aa). Lys134 participates in a covalent cross-link: Glycyl lysine isopeptide (Lys-Gly) (interchain with G-Cter in ubiquitin). Catalysis depends on residues His237 and Cys285. A propeptide spans 298–316 (interdomain linker); that stretch reads SVGVSGNLSLPTTEEFEDD. Ser302 carries the phosphoserine modification.

The protein belongs to the peptidase C14A family. Heterotetramer that consists of two anti-parallel arranged heterodimers, each one formed by a 20 kDa (Caspase-1 subunit p20) and a 10 kDa (Caspase-1 subunit p10) subunit. May be a component of the inflammasome, a protein complex which also includes PYCARD, CARD8 and NLRP2 and whose function would be the activation of pro-inflammatory caspases. Component of the AIM2 PANoptosome complex, a multiprotein complex that drives inflammatory cell death (PANoptosis). Interacts with CARD8; interacts with the released C-terminus of CARD8 which forms an inflammasome and directly activates CASP1 to promote pyroptosis. Both the p10 and p20 subunits interact with MEFV. Interacts with CARD17P/INCA and CARD18. Interacts with SERPINB1; this interaction regulates CASP1 activity. As to quaternary structure, heterotetramer that consists of two anti-parallel arranged heterodimers, each one formed by a 20 kDa (Caspase-1 subunit p20) and a 10 kDa (Caspase-1 subunit p10) subunit. Can form a heterodimer with isoform epsilon which then has an inhibitory effect. In terms of assembly, heterotetramer that consists of two anti-parallel arranged heterodimers, each one formed by a 20 kDa (Caspase-1 subunit p20) and a 10 kDa (Caspase-1 subunit p10) subunit. Can form a heterodimer with Caspase-1 subunit p20 which then has an inhibitory effect. Post-translationally, the two subunits are derived from the precursor sequence by an autocatalytic mechanism. Ubiquitinated via 'Lys-11'-linked polyubiquitination. Deubiquitinated by USP8. In terms of processing, cleavage in the interdomain linker region is required to induce pyroptosis. Expressed in larger amounts in spleen and lung. Detected in liver, heart, small intestine, colon, thymus, prostate, skeletal muscle, peripheral blood leukocytes, kidney and testis. No expression in the brain.

The protein resides in the cytoplasm. The protein localises to the cell membrane. The catalysed reaction is Strict requirement for an Asp residue at position P1 and has a preferred cleavage sequence of Tyr-Val-Ala-Asp-|-.. (Microbial infection) Specifically inhibited by the cowpox virus Crma protein. Its function is as follows. Thiol protease involved in a variety of inflammatory processes by proteolytically cleaving other proteins, such as the precursors of the inflammatory cytokines interleukin-1 beta (IL1B) and interleukin 18 (IL18) as well as the pyroptosis inducer Gasdermin-D (GSDMD), into active mature peptides. Plays a key role in cell immunity as an inflammatory response initiator: once activated through formation of an inflammasome complex, it initiates a pro-inflammatory response through the cleavage of the two inflammatory cytokines IL1B and IL18, releasing the mature cytokines which are involved in a variety of inflammatory processes. Cleaves a tetrapeptide after an Asp residue at position P1. Also initiates pyroptosis, a programmed lytic cell death pathway, through cleavage of GSDMD. In contrast to cleavage of interleukin IL1B, recognition and cleavage of GSDMD is not strictly dependent on the consensus cleavage site but depends on an exosite interface on CASP1 that recognizes and binds the Gasdermin-D, C-terminal (GSDMD-CT) part. Cleaves and activates CASP7 in response to bacterial infection, promoting plasma membrane repair. Upon inflammasome activation, during DNA virus infection but not RNA virus challenge, controls antiviral immunity through the cleavage of CGAS, rendering it inactive. In apoptotic cells, cleaves SPHK2 which is released from cells and remains enzymatically active extracellularly. Apoptosis inactive. This chain is Caspase-1 (CASP1), found in Homo sapiens (Human).